The chain runs to 95 residues: Large ribosomal subunit protein eL43 (95 aa).

The segment at 38–59 (CPDCGSEAVSREGTGIWQCGKC) adopts a C4-type zinc-finger fold.

The protein belongs to the eukaryotic ribosomal protein eL43 family. Requires Zn(2+) as cofactor.

This chain is Large ribosomal subunit protein eL43, found in Halobacterium salinarum (strain ATCC 29341 / DSM 671 / R1).